Consider the following 281-residue polypeptide: Ribosomal protein L11 methyltransferase (281 aa).

S-adenosyl-L-methionine is bound by residues T131, G152, D174, and N217.

It belongs to the methyltransferase superfamily. PrmA family.

The protein resides in the cytoplasm. The enzyme catalyses L-lysyl-[protein] + 3 S-adenosyl-L-methionine = N(6),N(6),N(6)-trimethyl-L-lysyl-[protein] + 3 S-adenosyl-L-homocysteine + 3 H(+). Methylates ribosomal protein L11. The protein is Ribosomal protein L11 methyltransferase of Phocaeicola vulgatus (strain ATCC 8482 / DSM 1447 / JCM 5826 / CCUG 4940 / NBRC 14291 / NCTC 11154) (Bacteroides vulgatus).